The sequence spans 123 residues: SGSCATKTCWMMLPKFREVGYALKDKYSEAEYVEPVRASRYRRPVFLKIKKSSTYRKPMDTDLVYIMNSPNYCEEDPVSGSVGTRGRLCNRTSPGAAGCDLMCCGRGYNTHQYKKMWQCNCKF.

Ser1 carries the O-palmitoleoyl serine; by PORCN lipid modification. A disulfide bridge connects residues Cys89 and Cys104. Asn90 carries N-linked (GlcNAc...) asparagine glycosylation. Positions Cys121–Phe123 match the Microbody targeting signal motif.

Belongs to the Wnt family. Post-translationally, palmitoleoylation is required for efficient binding to frizzled receptors. Depalmitoleoylation leads to Wnt signaling pathway inhibition.

The protein resides in the secreted. It is found in the extracellular space. The protein localises to the extracellular matrix. In terms of biological role, ligand for members of the frizzled family of seven transmembrane receptors. Probable developmental protein. May be a signaling molecule which affects the development of discrete regions of tissues. Is likely to signal over only few cell diameters. The polypeptide is Protein Wnt-7(I) (WNT-7(I)) (Eptatretus stoutii (Pacific hagfish)).